The chain runs to 281 residues: Undecaprenyl-diphosphatase (281 aa).

Helical transmembrane passes span 5 to 25, 48 to 68, 92 to 112, 118 to 138, 154 to 174, 192 to 212, 226 to 246, and 261 to 281; these read LFVL…FLPI, VKMY…LLYW, FWFM…LLDA, LMTP…MIYA, VTPK…IPGM, VVAA…YSLL, AELI…VAVI, and FAIY…MGFF.

This sequence belongs to the UppP family.

The protein localises to the cell membrane. It carries out the reaction di-trans,octa-cis-undecaprenyl diphosphate + H2O = di-trans,octa-cis-undecaprenyl phosphate + phosphate + H(+). Functionally, catalyzes the dephosphorylation of undecaprenyl diphosphate (UPP). Confers resistance to bacitracin. In Ruminiclostridium cellulolyticum (strain ATCC 35319 / DSM 5812 / JCM 6584 / H10) (Clostridium cellulolyticum), this protein is Undecaprenyl-diphosphatase.